The following is a 343-amino-acid chain: Methionine import ATP-binding protein MetN 3 (343 aa).

An ABC transporter domain is found at 2-241; it reads IELSNITKVF…PKTPLAQKFI (240 aa). Position 38–45 (38–45) interacts with ATP; the sequence is GASGAGKS.

This sequence belongs to the ABC transporter superfamily. Methionine importer (TC 3.A.1.24) family. The complex is composed of two ATP-binding proteins (MetN), two transmembrane proteins (MetI) and a solute-binding protein (MetQ).

Its subcellular location is the cell inner membrane. It carries out the reaction L-methionine(out) + ATP + H2O = L-methionine(in) + ADP + phosphate + H(+). The catalysed reaction is D-methionine(out) + ATP + H2O = D-methionine(in) + ADP + phosphate + H(+). Part of the ABC transporter complex MetNIQ involved in methionine import. Responsible for energy coupling to the transport system. This Pectobacterium atrosepticum (strain SCRI 1043 / ATCC BAA-672) (Erwinia carotovora subsp. atroseptica) protein is Methionine import ATP-binding protein MetN 3.